The primary structure comprises 83 residues: Small ribosomal subunit protein bS20 (83 aa).

It belongs to the bacterial ribosomal protein bS20 family.

Functionally, binds directly to 16S ribosomal RNA. This Flavobacterium psychrophilum (strain ATCC 49511 / DSM 21280 / CIP 103535 / JIP02/86) protein is Small ribosomal subunit protein bS20.